We begin with the raw amino-acid sequence, 911 residues long: Envelope glycoprotein B (911 aa).

The signal sequence occupies residues 1-30 (MRVCSEASPRRRQVTMLVSLLLFSAQAGFC). Topologically, residues 31–778 (ARSAAGHSGI…SGISSFLANP (748 aa)) are virion surface. Disulfide bonds link Cys86–Cys543, Cys103–Cys499, Cys177–Cys239, Cys330–Cys378, and Cys566–Cys635. Residues Asn111 and Asn130 are each glycosylated (N-linked (GlcNAc...) asparagine; by host). Residues 143–149 (TWKGFGL) are involved in fusion and/or binding to host membrane. A glycan (N-linked (GlcNAc...) asparagine; by host) is linked at Asn221. The tract at residues 228-233 (ALGYRT) is involved in fusion and/or binding to host membrane. Asn347, Asn369, Asn384, Asn438, and Asn594 each carry an N-linked (GlcNAc...) asparagine; by host glycan. The segment at 591 to 610 (RPANNSDVGGSQQAGEAEAQ) is disordered. Residues 599–610 (GGSQQAGEAEAQ) show a composition bias toward low complexity. The N-linked (GlcNAc...) asparagine; by host glycan is linked to Asn662. A hydrophobic membrane proximal region region spans residues 722–776 (LDTALKFDDGLATLRAIGEFLTNTLGGAGKVLGNVVMGAAAAIISTVSGISSFLA). The chain crosses the membrane as a helical span at residues 779-799 (FAALGIGIAVIVCVIMGLLAF). The Intravirion segment spans residues 800 to 911 (RYVMTLRANP…EDYYYDDEHL (112 aa)).

Belongs to the herpesviridae glycoprotein B family. As to quaternary structure, homotrimer; disulfide-linked. Binds to heparan sulfate proteoglycans. Interacts with gH/gL heterodimer.

It is found in the virion membrane. Its subcellular location is the host cell membrane. The protein resides in the host endosome membrane. It localises to the host Golgi apparatus membrane. Its function is as follows. Envelope glycoprotein that forms spikes at the surface of virion envelope. Essential for the initial attachment to heparan sulfate moieties of the host cell surface proteoglycans. Involved in fusion of viral and cellular membranes leading to virus entry into the host cell. Following initial binding to its host receptors, membrane fusion is mediated by the fusion machinery composed at least of gB and the heterodimer gH/gL. May be involved in the fusion between the virion envelope and the outer nuclear membrane during virion egress. The polypeptide is Envelope glycoprotein B (Amazona oratrix (yellow-headed parrot)).